The chain runs to 656 residues: uncharacterized protein (656 aa).

Residues 623–656 form a disordered region; the sequence is EIDIPGTPASIDPEWSRPPGSITDDHVFDAPLHR. The span at 645–656 shows a compositional bias: basic and acidic residues; that stretch reads TDDHVFDAPLHR.

This is an uncharacterized protein from Mycobacterium tuberculosis (strain CDC 1551 / Oshkosh).